A 543-amino-acid polypeptide reads, in one-letter code: Alanine aminotransferase 1, mitochondrial (543 aa).

Residues 1–55 (MRRFVIGQAKNLIDQSRRRQLHHHKNLSFVSLIPPFSAPSDSSSRHLSSSSSSDM) constitute a mitochondrion transit peptide. The span at 43-63 (SSRHLSSSSSSDMSASDSSSS) shows a compositional bias: low complexity. The interval 43–64 (SSRHLSSSSSSDMSASDSSSSL) is disordered. The residue at position 56 (Ser56) is an N-acetylserine. Pyridoxal 5'-phosphate-binding positions include Tyr173, 209-210 (AS), Tyr235, Asn291, Tyr322, and 354-356 (SFQ). Position 360 is an N6-(pyridoxal phosphate)lysine (Lys360). Positions 369 and 397 each coordinate pyridoxal 5'-phosphate.

This sequence belongs to the class-I pyridoxal-phosphate-dependent aminotransferase family. Alanine aminotransferase subfamily. As to quaternary structure, homodimer. Pyridoxal 5'-phosphate is required as a cofactor. The N-terminus is blocked. Mostly expressed in roots and shoots, mostly in vascular tissues, and, to a lower extent, in flowers and leaves.

The protein resides in the mitochondrion. It carries out the reaction L-alanine + 2-oxoglutarate = pyruvate + L-glutamate. The protein operates within photosynthesis; C4 acid pathway. It participates in amino-acid degradation; L-alanine degradation via transaminase pathway; pyruvate from L-alanine: step 1/1. In terms of biological role, is the major alanine aminotransferase in roots that catalyzes the conversion of alanine to pyruvate. Involved in the rapid conversion of alanine to pyruvate during recovery from low-oxygen stress. This chain is Alanine aminotransferase 1, mitochondrial, found in Arabidopsis thaliana (Mouse-ear cress).